Here is a 508-residue protein sequence, read N- to C-terminus: Glycerol kinase (508 aa).

Thr14 is an ADP binding site. 3 residues coordinate ATP: Thr14, Thr15, and Ser16. Position 14 (Thr14) interacts with sn-glycerol 3-phosphate. Arg18 contributes to the ADP binding site. Arg84, Glu85, Tyr134, and Asp247 together coordinate sn-glycerol 3-phosphate. The glycerol site is built by Arg84, Glu85, Tyr134, Asp247, and Gln248. Positions 269 and 313 each coordinate ADP. Positions 269, 313, 317, and 416 each coordinate ATP. Residue Gly416 coordinates ADP.

Belongs to the FGGY kinase family.

It carries out the reaction glycerol + ATP = sn-glycerol 3-phosphate + ADP + H(+). It functions in the pathway polyol metabolism; glycerol degradation via glycerol kinase pathway; sn-glycerol 3-phosphate from glycerol: step 1/1. Inhibited by fructose 1,6-bisphosphate (FBP). Key enzyme in the regulation of glycerol uptake and metabolism. Catalyzes the phosphorylation of glycerol to yield sn-glycerol 3-phosphate. This Mycoplasmoides gallisepticum (strain R(low / passage 15 / clone 2)) (Mycoplasma gallisepticum) protein is Glycerol kinase.